Consider the following 288-residue polypeptide: uncharacterized protein (288 aa).

Disordered stretches follow at residues 31-52 (KAVD…EAPS) and 179-288 (YPSK…VELK). Over residues 206–217 (RPSSPTNFSKLI) the composition is skewed to polar residues. Positions 221-236 (YKDEWLQQQADSDKRA) are enriched in basic and acidic residues. Low complexity-rich tracts occupy residues 237–249 (PQTP…SPSP) and 267–276 (AAESSPLSSA).

This is an uncharacterized protein from Bos taurus (Bovine).